A 600-amino-acid chain; its full sequence is Transcription factor efl-3 (600 aa).

The disordered stretch occupies residues 35–65 (LPEPRVNRTTDPDHENLLPSPVPRPSPAMSQ). The span at 39-50 (RVNRTTDPDHEN) shows a compositional bias: basic and acidic residues. DNA-binding regions lie at residues 95-164 (RKEK…QWQG) and 253-343 (RDRQ…VYCG).

This sequence belongs to the E2F/DP family.

It localises to the nucleus. In terms of biological role, probable transcription factor which represses gene expression in a subset of ventral nerve cord neurons. Involved in regulating programmed cell death and determining cell fate during development, acting in a partially redundant manner with lin-39 to repress the BH3 domain-encoding gene egl-1 in the VA and VB motor neurons. The polypeptide is Transcription factor efl-3 (Caenorhabditis elegans).